The sequence spans 322 residues: DNA repair and recombination protein RadA (322 aa).

Residue 105–112 coordinates ATP; that stretch reads GMYGSGKT.

This sequence belongs to the eukaryotic RecA-like protein family.

Functionally, involved in DNA repair and in homologous recombination. Binds and assemble on single-stranded DNA to form a nucleoprotein filament. Hydrolyzes ATP in a ssDNA-dependent manner and promotes DNA strand exchange between homologous DNA molecules. This is DNA repair and recombination protein RadA from Methanococcus maripaludis (strain C7 / ATCC BAA-1331).